The sequence spans 520 residues: Probable methylmalonate-semialdehyde/malonate-semialdehyde dehydrogenase [acylating], mitochondrial (520 aa).

NAD(+) contacts are provided by A169, F171, K195, E198, R199, and S248. The Nucleophile role is filled by C303. NAD(+) is bound at residue E403.

This sequence belongs to the aldehyde dehydrogenase family. As to quaternary structure, homotetramer.

Its subcellular location is the mitochondrion. The enzyme catalyses 2-methyl-3-oxopropanoate + NAD(+) + CoA + H2O = propanoyl-CoA + hydrogencarbonate + NADH + H(+). It catalyses the reaction 3-oxopropanoate + NAD(+) + CoA + H2O = hydrogencarbonate + acetyl-CoA + NADH + H(+). Its function is as follows. Probable malonate and methylmalonate semialdehyde dehydrogenase involved in the catabolism of valine, thymine, and compounds catabolized by way of beta-alanine, including uracil and cytidine. The polypeptide is Probable methylmalonate-semialdehyde/malonate-semialdehyde dehydrogenase [acylating], mitochondrial (Drosophila melanogaster (Fruit fly)).